The primary structure comprises 642 residues: Threonine--tRNA ligase (642 aa).

One can recognise a TGS domain in the interval 1-61; that stretch reads MPVITLPDGS…ETDAELSIIT (61 aa). A catalytic region spans residues 243–534; it reads DHRKIGKQLD…LIEEYAGRFP (292 aa). Cys334, His385, and His511 together coordinate Zn(2+).

It belongs to the class-II aminoacyl-tRNA synthetase family. As to quaternary structure, homodimer. Requires Zn(2+) as cofactor.

It localises to the cytoplasm. The enzyme catalyses tRNA(Thr) + L-threonine + ATP = L-threonyl-tRNA(Thr) + AMP + diphosphate + H(+). Its function is as follows. Catalyzes the attachment of threonine to tRNA(Thr) in a two-step reaction: L-threonine is first activated by ATP to form Thr-AMP and then transferred to the acceptor end of tRNA(Thr). Also edits incorrectly charged L-seryl-tRNA(Thr). The protein is Threonine--tRNA ligase of Shewanella sp. (strain MR-7).